The primary structure comprises 107 residues: uncharacterized protein (107 aa).

Residues 1 to 18 (MRTLMLIILSILIYLSSA) form the signal peptide.

This is an uncharacterized protein from Caenorhabditis elegans.